Reading from the N-terminus, the 257-residue chain is Hydroxypyruvate/pyruvate aldolase (257 aa).

Catalysis depends on H48, which acts as the Proton acceptor. Residues E152 and D178 each coordinate a divalent metal cation.

It belongs to the HpcH/HpaI aldolase family. A divalent metal cation serves as cofactor.

The enzyme catalyses D-glyceraldehyde + 3-hydroxypyruvate = 2-dehydro-D-gluconate. It carries out the reaction D-glyceraldehyde + pyruvate = 2-dehydro-3-deoxy-L-galactonate. It catalyses the reaction 2-dehydro-3-deoxy-D-gluconate = D-glyceraldehyde + pyruvate. In terms of biological role, aldolase which can catalyze in vitro the aldolisation reaction between hydroxypyruvate (HPA) or pyruvate (PA) and D-glyceraldehyde (D-GA). The condensation of hydroxypyruvate and D-glyceraldehyde produces 2-dehydro-D-gluconate as the major product. The condensation of pyruvate and D-glyceraldehyde produces 2-dehydro-3-deoxy-L-galactonate as the major product and 2-dehydro-3-deoxy-D-gluconate. This is Hydroxypyruvate/pyruvate aldolase from Roseovarius nubinhibens (strain ATCC BAA-591 / DSM 15170 / ISM).